Reading from the N-terminus, the 750-residue chain is Photosystem I P700 chlorophyll a apoprotein A1 (750 aa).

The next 8 helical transmembrane spans lie at 72–95 (VFSAHFGQLAVIFIWLSGMYFHGA), 158–181 (LYTTAIGGLIAAGLMFFAGWFHYH), 197–221 (MNHHLAGLLGLGSLSWAGHQIHVSL), 293–311 (TVHHHVAIAVLFIVAGHMY), 348–371 (WHAQLGLNLALMGSLSIIVAHHMY), 387–413 (LSLFTHHMWIGGFCIVGGAAHAAIFMV), 435–457 (AIISHLNWVCIFLGFHSFGLYIH), and 532–550 (FLVHHIHAFTIHVTVLILL). Positions 574 and 583 each coordinate [4Fe-4S] cluster. The next 2 membrane-spanning stretches (helical) occupy residues 590-611 (HVFLGLFWMYNCLSIVIFHFSW) and 664-686 (LSAYGLMFLGAHFVWAFSLMFLF). A chlorophyll a'-binding site is contributed by His-675. Chlorophyll a-binding residues include Met-683 and Tyr-691. Trp-692 contributes to the phylloquinone binding site. A helical transmembrane segment spans residues 724-744 (AVGVAHYLLGGIATTWAFFLA).

This sequence belongs to the PsaA/PsaB family. The PsaA/B heterodimer binds the P700 chlorophyll special pair and subsequent electron acceptors. PSI consists of a core antenna complex that captures photons, and an electron transfer chain that converts photonic excitation into a charge separation. The eukaryotic PSI reaction center is composed of at least 11 subunits. Requires P700 is a chlorophyll a/chlorophyll a' dimer, A0 is one or more chlorophyll a, A1 is one or both phylloquinones and FX is a shared 4Fe-4S iron-sulfur center. as cofactor.

The protein localises to the plastid. Its subcellular location is the chloroplast thylakoid membrane. The enzyme catalyses reduced [plastocyanin] + hnu + oxidized [2Fe-2S]-[ferredoxin] = oxidized [plastocyanin] + reduced [2Fe-2S]-[ferredoxin]. PsaA and PsaB bind P700, the primary electron donor of photosystem I (PSI), as well as the electron acceptors A0, A1 and FX. PSI is a plastocyanin-ferredoxin oxidoreductase, converting photonic excitation into a charge separation, which transfers an electron from the donor P700 chlorophyll pair to the spectroscopically characterized acceptors A0, A1, FX, FA and FB in turn. Oxidized P700 is reduced on the lumenal side of the thylakoid membrane by plastocyanin. In Mesostigma viride (Green alga), this protein is Photosystem I P700 chlorophyll a apoprotein A1.